Here is a 215-residue protein sequence, read N- to C-terminus: Cytochrome b6 (215 aa).

Residues 32–52 form a helical membrane-spanning segment; sequence IFYCIGGIVFTSFLIQVASGF. Residue Cys-35 coordinates heme c. Heme b-binding residues include His-86 and His-100. Transmembrane regions (helical) follow at residues 90–110, 116–136, and 186–206; these read ASMM…TGGF, LTWV…VTGY, and LHTF…FLMI. Heme b-binding residues include His-187 and His-202.

It belongs to the cytochrome b family. PetB subfamily. The 4 large subunits of the cytochrome b6-f complex are cytochrome b6, subunit IV (17 kDa polypeptide, PetD), cytochrome f and the Rieske protein, while the 4 small subunits are PetG, PetL, PetM and PetN. The complex functions as a dimer. Heme b serves as cofactor. Requires heme c as cofactor.

The protein resides in the plastid. It is found in the chloroplast thylakoid membrane. Its function is as follows. Component of the cytochrome b6-f complex, which mediates electron transfer between photosystem II (PSII) and photosystem I (PSI), cyclic electron flow around PSI, and state transitions. The polypeptide is Cytochrome b6 (Gracilaria tenuistipitata var. liui (Red alga)).